The sequence spans 505 residues: L-amino-acid oxidase (505 aa).

Positions 1–18 are cleaved as a signal peptide; the sequence is MNVFLMFSLLFLAALGSC. An intrachain disulfide couples Cys28 to Cys191. Residues 61–62, 81–82, Arg89, and 105–108 contribute to the FAD site; these read MS, EA, and GPMR. Residue Arg108 participates in substrate binding. The N-linked (GlcNAc...) asparagine glycan is linked to Asn190. His241 provides a ligand contact to substrate. Val279 contacts FAD. Cys349 and Cys430 are joined by a disulfide. N-linked (GlcNAc...) asparagine glycosylation is present at Asn379. Tyr390 serves as a coordination point for substrate. FAD-binding positions include Glu475 and 482 to 487; that span reads GWIDST. 482–483 is a substrate binding site; the sequence is GW.

It belongs to the flavin monoamine oxidase family. FIG1 subfamily. As to quaternary structure, monomer. This is in contrast with most of its orthologs, that are non-covalently linked homodimers. It depends on FAD as a cofactor. N-glycosylated. As to expression, expressed by the venom gland.

The protein localises to the secreted. It carries out the reaction an L-alpha-amino acid + O2 + H2O = a 2-oxocarboxylate + H2O2 + NH4(+). It catalyses the reaction L-leucine + O2 + H2O = 4-methyl-2-oxopentanoate + H2O2 + NH4(+). Its function is as follows. Catalyzes an oxidative deamination of predominantly hydrophobic and aromatic L-amino acids, thus producing hydrogen peroxide that may contribute to the diverse toxic effects of this enzyme. Shows activity on L-Leu. Exhibits diverse biological activities, such as hemorrhage, edema, antibacterial and antiparasitic activities, as well as regulation of platelet aggregation. Effects of snake L-amino oxidases on platelets are controversial, since they either induce aggregation or inhibit agonist-induced aggregation. These different effects are probably due to different experimental conditions. This protein has an ability to induce hemolysis and apoptosis. The protein is L-amino-acid oxidase of Protobothrops flavoviridis (Habu).